A 957-amino-acid chain; its full sequence is Protein translocase subunit SecA (957 aa).

ATP contacts are provided by residues Gln-86, 104–108 (GEGKT), and Asp-494. Low complexity predominate over residues 929–947 (SRPAPAPTAAASPDPSSAS). A disordered region spans residues 929–957 (SRPAPAPTAAASPDPSSASGVVEADFTEE).

The protein belongs to the SecA family. As to quaternary structure, monomer and homodimer. Part of the essential Sec protein translocation apparatus which comprises SecA, SecYEG and auxiliary proteins SecDF. Other proteins may also be involved.

It localises to the cell inner membrane. It is found in the cellular thylakoid membrane. The protein localises to the cytoplasm. It carries out the reaction ATP + H2O + cellular proteinSide 1 = ADP + phosphate + cellular proteinSide 2.. In terms of biological role, part of the Sec protein translocase complex. Interacts with the SecYEG preprotein conducting channel. Has a central role in coupling the hydrolysis of ATP to the transfer of proteins into and across the cell membrane, serving as an ATP-driven molecular motor driving the stepwise translocation of polypeptide chains across the membrane. Probably participates in protein translocation into and across both the cytoplasmic and thylakoid membranes in cyanobacterial cells. The sequence is that of Protein translocase subunit SecA from Synechococcus sp. (strain JA-2-3B'a(2-13)) (Cyanobacteria bacterium Yellowstone B-Prime).